A 428-amino-acid polypeptide reads, in one-letter code: UDP-N-acetylglucosamine 1-carboxyvinyltransferase (428 aa).

Position 25–26 (25–26) interacts with phosphoenolpyruvate; the sequence is KN. Arginine 102 is a binding site for UDP-N-acetyl-alpha-D-glucosamine. The active-site Proton donor is the cysteine 126. A 2-(S-cysteinyl)pyruvic acid O-phosphothioketal modification is found at cysteine 126. UDP-N-acetyl-alpha-D-glucosamine contacts are provided by aspartate 316 and valine 338.

Belongs to the EPSP synthase family. MurA subfamily.

It is found in the cytoplasm. It catalyses the reaction phosphoenolpyruvate + UDP-N-acetyl-alpha-D-glucosamine = UDP-N-acetyl-3-O-(1-carboxyvinyl)-alpha-D-glucosamine + phosphate. The protein operates within cell wall biogenesis; peptidoglycan biosynthesis. Cell wall formation. Adds enolpyruvyl to UDP-N-acetylglucosamine. This is UDP-N-acetylglucosamine 1-carboxyvinyltransferase from Anaplasma marginale (strain St. Maries).